The primary structure comprises 239 residues: MKNDVISPEFDENGRPLRRIRSFVRRQGRLTKGQEHALENYWPVMGVEFSEDMLDFPALFGREAPVTLEIGFGMGASLVAMAKDRPEQDFLGIEVHSPGVGACLASAHEEGLSNLRVMCHDAVEVLHKMIPDNSLRMVQLFFPDPWHKARHNKRRIIQVPFAELVKSKLQLGGIFHMATDWEPYAEHMLEVMSSIDGYKNLSESNDYVPRPASRPVTKFEQRGHRLGHGVWDLMFERVK.

The S-adenosyl-L-methionine site is built by E69, E94, D121, and D144. Residue D144 is part of the active site. K148 contacts substrate. The tract at residues 150-155 is interaction with RNA; sequence RHNKRR. Substrate-binding positions include D180 and 217–220; that span reads TKFE.

It belongs to the class I-like SAM-binding methyltransferase superfamily. TrmB family. As to quaternary structure, monomer.

The enzyme catalyses guanosine(46) in tRNA + S-adenosyl-L-methionine = N(7)-methylguanosine(46) in tRNA + S-adenosyl-L-homocysteine. It participates in tRNA modification; N(7)-methylguanine-tRNA biosynthesis. Functionally, catalyzes the formation of N(7)-methylguanine at position 46 (m7G46) in tRNA. This is tRNA (guanine-N(7)-)-methyltransferase from Escherichia coli O6:K15:H31 (strain 536 / UPEC).